A 187-amino-acid polypeptide reads, in one-letter code: ATP synthase subunit b (187 aa).

The helical transmembrane segment at 31 to 51 (VAIMGLAIFVLFLILSYLLFN) threads the bilayer.

It belongs to the ATPase B chain family. F-type ATPases have 2 components, F(1) - the catalytic core - and F(0) - the membrane proton channel. F(1) has five subunits: alpha(3), beta(3), gamma(1), delta(1), epsilon(1). F(0) has three main subunits: a(1), b(2) and c(10-14). The alpha and beta chains form an alternating ring which encloses part of the gamma chain. F(1) is attached to F(0) by a central stalk formed by the gamma and epsilon chains, while a peripheral stalk is formed by the delta and b chains.

It is found in the cell membrane. In terms of biological role, f(1)F(0) ATP synthase produces ATP from ADP in the presence of a proton or sodium gradient. F-type ATPases consist of two structural domains, F(1) containing the extramembraneous catalytic core and F(0) containing the membrane proton channel, linked together by a central stalk and a peripheral stalk. During catalysis, ATP synthesis in the catalytic domain of F(1) is coupled via a rotary mechanism of the central stalk subunits to proton translocation. Component of the F(0) channel, it forms part of the peripheral stalk, linking F(1) to F(0). The polypeptide is ATP synthase subunit b (Lachnoclostridium phytofermentans (strain ATCC 700394 / DSM 18823 / ISDg) (Clostridium phytofermentans)).